Reading from the N-terminus, the 351-residue chain is Outer membrane protein A (351 aa).

Positions 1–21 (MKKTAIAIAVALAGFATVAQA) are cleaved as a signal peptide. A run of 8 beta stranded transmembrane segments spans residues 27–37 (TWYTGAKLGWS), 55–66 (QLGAGAFGGYQV), 70–78 (VGFEMGYDW), 96–107 (QGVQLTAKLGYP), 112–120 (LDIYTRLGG), 147–156 (PVFAGGVEWA), 161–168 (IATRLEYQ), and 187–195 (LLSLGVSYR). 4 repeat units span residues 206 to 207 (AP), 208 to 209 (AP), 210 to 211 (AP), and 212 to 213 (AP). Residues 206-213 (APAPAPAP) form a 4 X 2 AA tandem repeats of A-P region. Residues 215–343 (VQTKHFTLKS…RVEIEVKGIK (129 aa)) enclose the OmpA-like domain. The cysteines at positions 316 and 328 are disulfide-linked.

This sequence belongs to the outer membrane OOP (TC 1.B.6) superfamily. OmpA family. In terms of assembly, monomer and homodimer.

It is found in the cell outer membrane. Functionally, with TolR probably plays a role in maintaining the position of the peptidoglycan cell wall in the periplasm. Acts as a porin with low permeability that allows slow penetration of small solutes; an internal gate slows down solute passage. Its function is as follows. Required for conjugation with F-type plasmids; probably serves as the mating receptor on recipient cells. The chain is Outer membrane protein A from Escherichia fergusonii (strain ATCC 35469 / DSM 13698 / CCUG 18766 / IAM 14443 / JCM 21226 / LMG 7866 / NBRC 102419 / NCTC 12128 / CDC 0568-73).